The following is an 895-amino-acid chain: Putative endoplasmic reticulum metallopeptidase 1-A (895 aa).

The segment at 1 to 30 (MLRRRGGPNELRDELNNSKNQPEDDQRTKR) is disordered. Residues 1 to 34 (MLRRRGGPNELRDELNNSKNQPEDDQRTKRGRES) are Cytoplasmic-facing. Basic and acidic residues predominate over residues 10 to 30 (ELRDELNNSKNQPEDDQRTKR). Residues 35–55 (IGFRHWIYFVLTVAIVYAGVV) traverse the membrane as a helical segment. Residues 56–383 (ALHRKMPAVR…VVGLFTVYYS (328 aa)) lie on the Lumenal side of the membrane. Residues His174 and Asp186 each contribute to the Zn(2+) site. Glu220 functions as the Proton acceptor in the catalytic mechanism. Glu221, Glu247, and His323 together coordinate Zn(2+). A helical membrane pass occupies residues 384-404 (VNVGKLLNYIACFATYFLVVL). The Cytoplasmic portion of the chain corresponds to 405-423 (RIRNRLYSVGDLAIAFKHH). Residues 424–444 (VVAFLAMVITMLLIIAFVVQM) form a helical membrane-spanning segment. Residues 445 to 452 (DLVMCWYK) are Lumenal-facing. Residues 453 to 473 (MPEIVGALYVLPMLIAGAIVH) traverse the membrane as a helical segment. The Cytoplasmic portion of the chain corresponds to 474 to 492 (SHYADNNRIRNVEMVQYDT). Residues 493–513 (ILLSFASILFLMTFYNLSSAF) form a helical membrane-spanning segment. Residues 514-517 (YVLN) are Lumenal-facing. A helical transmembrane segment spans residues 518 to 538 (NLILPVFKDIIIWALGLFGVI). The Cytoplasmic portion of the chain corresponds to 539-544 (RRVTPR). Residues 545 to 565 (VLFFTQLFCFLPTFVFAAYAI) form a helical membrane-spanning segment. Topologically, residues 566–586 (SQCVDFFVPVMGRLGNAINPE) are lumenal. The helical transmembrane segment at 587 to 607 (FIMGPLGLVIASGFILFVNNL) threads the bilayer. Residues 608–613 (FYISRR) are Cytoplasmic-facing. Residues 614–634 (MNYIIRLLFAIFALFILVLIT) form a helical membrane-spanning segment. The Lumenal portion of the chain corresponds to 635 to 895 (TKVGNPYEYS…GRSEIVVKIF (261 aa)). N-linked (GlcNAc...) asparagine glycans are attached at residues Asn659, Asn702, and Asn758.

It belongs to the peptidase M28 family. Requires Zn(2+) as cofactor.

The protein localises to the endoplasmic reticulum membrane. The sequence is that of Putative endoplasmic reticulum metallopeptidase 1-A from Caenorhabditis elegans.